Consider the following 285-residue polypeptide: Geranyl diphosphate 2-C-methyltransferase (285 aa).

It belongs to the geranyl diphosphate 2-C-methyltransferase family. It depends on Mg(2+) as a cofactor.

The catalysed reaction is (2E)-geranyl diphosphate + S-adenosyl-L-methionine = (E)-2-methylgeranyl diphosphate + S-adenosyl-L-homocysteine + H(+). Catalyzes the SAM-dependent methylation of geranyl diphosphate (GPP) to yield (E)-2-methylgeranyl diphosphate (2-MeGPP). This Saccharopolyspora erythraea (strain ATCC 11635 / DSM 40517 / JCM 4748 / NBRC 13426 / NCIMB 8594 / NRRL 2338) protein is Geranyl diphosphate 2-C-methyltransferase.